A 269-amino-acid polypeptide reads, in one-letter code: Pertussis toxin subunit 1 (269 aa).

The N-terminal stretch at 1–34 is a signal peptide; that stretch reads MRCTRAIRQTARTGWLTWLAILAVTAPVTSPAWA. W60 is an NAD(+) binding site. Residues H69 and E163 contribute to the active site. A disulfide bridge connects residues C75 and C235.

Belongs to the bacterial exotoxin subunit A family. Pertussis toxin contains five different chains, S1-S5. They are organized into 2 functional subunits: A, composed of S1 (which is toxic) and B, containing S2, S3, S5, and two copies of S4 (B binds to the membrane receptors). Dimers of S2-S4 and S3-S4 are held together by S5.

It localises to the secreted. Its function is as follows. S1 is an NAD-dependent ADP-ribosyltransferase, which plays a crucial role in the pathogenesis of B.pertussis causing disruption of normal host cellular regulation. It catalyzes the ADP-ribosylation of a cysteine in the alpha subunit of host heterotrimeric G proteins. In the absence of G proteins it also catalyzes the cleavage of NAD(+) into ADP-ribose and nicotinamide. It irreversibly uncouples the G-alpha GTP-binding proteins from their membrane receptors. This is Pertussis toxin subunit 1 (ptxA) from Bordetella pertussis (strain Tohama I / ATCC BAA-589 / NCTC 13251).